A 595-amino-acid chain; its full sequence is NADH-quinone oxidoreductase subunit C/D (595 aa).

The segment at 1–186 is NADH dehydrogenase I subunit C; the sequence is MAETDIAMPE…TPYMQDKAKQ (186 aa). An NADH dehydrogenase I subunit D region spans residues 210–595; that stretch reads DFMFLNLGPN…IDVVMADVDR (386 aa).

It in the N-terminal section; belongs to the complex I 30 kDa subunit family. The protein in the C-terminal section; belongs to the complex I 49 kDa subunit family. NDH-1 is composed of 13 different subunits. Subunits NuoB, CD, E, F, and G constitute the peripheral sector of the complex.

Its subcellular location is the cell inner membrane. The enzyme catalyses a quinone + NADH + 5 H(+)(in) = a quinol + NAD(+) + 4 H(+)(out). NDH-1 shuttles electrons from NADH, via FMN and iron-sulfur (Fe-S) centers, to quinones in the respiratory chain. The immediate electron acceptor for the enzyme in this species is believed to be ubiquinone. Couples the redox reaction to proton translocation (for every two electrons transferred, four hydrogen ions are translocated across the cytoplasmic membrane), and thus conserves the redox energy in a proton gradient. The polypeptide is NADH-quinone oxidoreductase subunit C/D (Acinetobacter baumannii (strain AYE)).